Reading from the N-terminus, the 795-residue chain is Protein Jade-3 (795 aa).

Over residues 1-25 the composition is skewed to low complexity; sequence MKRLRTPSSSDSSDNESPSTSFSSN. The disordered stretch occupies residues 1 to 41; the sequence is MKRLRTPSSSDSSDNESPSTSFSSNKYGSKPGTPASAQKKP. The PHD-type 1 zinc finger occupies 201–251; it reads DVICDVCRSPDSEEGNDMVFCDKCNICVHQACYGIVKVPDGNWLCRTCVLG. Residues 253-287 form a C2HC pre-PHD-type zinc finger; it reads TPQCLLCPKTGGAMKATRAGTKWAHVSCALWIPEV. The segment at 311 to 367 adopts a PHD-type 2 zinc-finger fold; that stretch reads LICSLCKLKTGACIQCSVKNCTIPFHVTCAFEHSLEMKTILDEGDEVKFKSYCLKHS. Disordered regions lie at residues 630 to 654, 667 to 687, and 714 to 795; these read HGQSSNGKTKNEAEKSRQIKSNGIL, AASEKDPRSEISGKSQSSGFH, and FEKN…SVQR. Polar residues-rich tracts occupy residues 678 to 687 and 720 to 732; these read SGKSQSSGFH and KSSGFSKPLSTER.

Belongs to the JADE family. Component of the HBO1 complex.

In terms of biological role, scaffold subunit of some HBO1 complexes, which have a histone H4 acetyltransferase activity. The protein is Protein Jade-3 (jade3) of Danio rerio (Zebrafish).